A 213-amino-acid polypeptide reads, in one-letter code: Large ribosomal subunit protein uL1 (213 aa).

Belongs to the universal ribosomal protein uL1 family. As to quaternary structure, part of the 50S ribosomal subunit.

Its function is as follows. Binds directly to 23S rRNA. Probably involved in E site tRNA release. Functionally, protein L1 is also a translational repressor protein, it controls the translation of its operon by binding to its mRNA. This is Large ribosomal subunit protein uL1 from Nanoarchaeum equitans (strain Kin4-M).